Reading from the N-terminus, the 336-residue chain is Dihydroorotate dehydrogenase (quinone) (336 aa).

FMN is bound by residues 62–66 and T86; that span reads AGLDK. Residue K66 coordinates substrate. 111-115 lines the substrate pocket; the sequence is NRMGF. Residues N139 and N172 each contribute to the FMN site. N172 is a substrate binding site. The Nucleophile role is filled by S175. A substrate-binding site is contributed by N177. K217 and T245 together coordinate FMN. Position 246-247 (246-247) interacts with substrate; that stretch reads NT. Residues G268, G297, and 318–319 each bind FMN; that span reads YS.

This sequence belongs to the dihydroorotate dehydrogenase family. Type 2 subfamily. Monomer. Requires FMN as cofactor.

The protein resides in the cell membrane. It catalyses the reaction (S)-dihydroorotate + a quinone = orotate + a quinol. Its pathway is pyrimidine metabolism; UMP biosynthesis via de novo pathway; orotate from (S)-dihydroorotate (quinone route): step 1/1. Catalyzes the conversion of dihydroorotate to orotate with quinone as electron acceptor. The polypeptide is Dihydroorotate dehydrogenase (quinone) (Vibrio vulnificus (strain YJ016)).